We begin with the raw amino-acid sequence, 230 residues long: Large ribosomal subunit protein uL1 (230 aa).

The protein belongs to the universal ribosomal protein uL1 family. As to quaternary structure, part of the 50S ribosomal subunit.

Binds directly to 23S rRNA. The L1 stalk is quite mobile in the ribosome, and is involved in E site tRNA release. Functionally, protein L1 is also a translational repressor protein, it controls the translation of the L11 operon by binding to its mRNA. This is Large ribosomal subunit protein uL1 from Nitrosospira multiformis (strain ATCC 25196 / NCIMB 11849 / C 71).